Consider the following 275-residue polypeptide: Large ribosomal subunit protein uL2c (275 aa).

The segment at 224–263 (VMNPVDHPHGGGEGRAPIGRKRPLTPWGRPALGKKSRKNH) is disordered.

This sequence belongs to the universal ribosomal protein uL2 family. As to quaternary structure, part of the 50S ribosomal subunit.

The protein localises to the plastid. Its subcellular location is the chloroplast. In Chaetosphaeridium globosum (Charophycean green alga), this protein is Large ribosomal subunit protein uL2c (rpl2).